The following is a 187-amino-acid chain: Protein GrpE (187 aa).

The span at 1–11 (MTDSSNEHETE) shows a compositional bias: basic and acidic residues. Residues 1–23 (MTDSSNEHETENPSVPNPDNEIQ) are disordered.

It belongs to the GrpE family. As to quaternary structure, homodimer.

It is found in the cytoplasm. In terms of biological role, participates actively in the response to hyperosmotic and heat shock by preventing the aggregation of stress-denatured proteins, in association with DnaK and GrpE. It is the nucleotide exchange factor for DnaK and may function as a thermosensor. Unfolded proteins bind initially to DnaJ; upon interaction with the DnaJ-bound protein, DnaK hydrolyzes its bound ATP, resulting in the formation of a stable complex. GrpE releases ADP from DnaK; ATP binding to DnaK triggers the release of the substrate protein, thus completing the reaction cycle. Several rounds of ATP-dependent interactions between DnaJ, DnaK and GrpE are required for fully efficient folding. This Chlamydia felis (strain Fe/C-56) (Chlamydophila felis) protein is Protein GrpE.